The chain runs to 537 residues: Prolyl 4-hydroxylase subunit alpha-2 (537 aa).

The signal sequence occupies residues 1-23 (MKLQVLVLVLLMSWFGVLSWVQA). N-linked (GlcNAc...) asparagine glycosylation is present at asparagine 117. Residues 209 to 242 (SLVLDYLSYAVFQLGDLHRAVELTRRLLSLDPSH) form a TPR repeat. N-linked (GlcNAc...) asparagine glycosylation is present at asparagine 266. Residues 414–522 (TAELLQVANY…KWVSNKWFHE (109 aa)) enclose the Fe2OG dioxygenase domain. The Fe cation site is built by histidine 432 and aspartate 434. Lysine 482 carries the post-translational modification N6-succinyllysine. Histidine 503 provides a ligand contact to Fe cation. Position 513 (lysine 513) interacts with 2-oxoglutarate.

Belongs to the P4HA family. As to quaternary structure, heterotetramer of two alpha-2 chains and two beta chains (P4HB) (the beta chain is the multi-functional PDI), where P4HB plays the role of a structural subunit; this tetramer catalyzes the formation of 4-hydroxyproline in collagen. Requires Fe(2+) as cofactor. It depends on L-ascorbate as a cofactor. Expressed at least in brain, heart and lung.

The protein resides in the endoplasmic reticulum lumen. The catalysed reaction is L-prolyl-[collagen] + 2-oxoglutarate + O2 = trans-4-hydroxy-L-prolyl-[collagen] + succinate + CO2. Its activity is regulated as follows. Inhibited by poly(L-proline) only at very high concentrations. Its function is as follows. Catalyzes the post-translational formation of 4-hydroxyproline in -Xaa-Pro-Gly- sequences in collagens and other proteins. This is Prolyl 4-hydroxylase subunit alpha-2 (P4ha2) from Mus musculus (Mouse).